The primary structure comprises 97 residues: MICOS complex subunit MIC12 (97 aa).

The chain crosses the membrane as a helical span at residues 7 to 24; that stretch reads LTSITAVSSTLAASYYFY.

Belongs to the MICOS complex subunit Mic12 family. As to quaternary structure, component of the mitochondrial contact site and cristae organizing system (MICOS) complex.

The protein resides in the mitochondrion inner membrane. Its function is as follows. Component of the MICOS complex, a large protein complex of the mitochondrial inner membrane that plays crucial roles in the maintenance of crista junctions, inner membrane architecture, and formation of contact sites to the outer membrane. This Zygosaccharomyces rouxii (strain ATCC 2623 / CBS 732 / NBRC 1130 / NCYC 568 / NRRL Y-229) protein is MICOS complex subunit MIC12 (AIM5).